Here is a 51-residue protein sequence, read N- to C-terminus: Large ribosomal subunit protein eL39z/eL39x (51 aa).

The disordered stretch occupies residues 1-21; it reads MPSHKSFMIKKKLGKKMRQNR. The span at 7-19 shows a compositional bias: basic residues; it reads FMIKKKLGKKMRQ.

It belongs to the eukaryotic ribosomal protein eL39 family.

This chain is Large ribosomal subunit protein eL39z/eL39x (RPL39A), found in Arabidopsis thaliana (Mouse-ear cress).